Here is a 535-residue protein sequence, read N- to C-terminus: High-affinity fructose transporter ght6 (535 aa).

Topologically, residues 1-9 (MAKILTIVM) are cytoplasmic. A helical transmembrane segment spans residues 10 to 30 (LVFVSMAGWMFGADTGSIGGI). Residues 31–58 (TNMRDFQSRYADRYDPVTDTYSYSSARQ) are Extracellular-facing. A helical transmembrane segment spans residues 59 to 79 (GLLVGMVNTGTTVGCLLSSPL). The Cytoplasmic segment spans residues 80-87 (GDRFGKRK). A helical membrane pass occupies residues 88 to 108 (CIMGWTLVYITGVIVQLTTIP). Topologically, residues 109–112 (SWVQ) are extracellular. A helical transmembrane segment spans residues 113–133 (MMVAKIWTGLGIGALSVIAPG). At 134 to 144 (YQSESSPPHIR) the chain is on the cytoplasmic side. The helical transmembrane segment at 145-165 (GAIVTTYQLFITLGIFIAACI) threads the bilayer. At 166–181 (NMGTHKYTTHPEAQWR) the chain is on the extracellular side. Residues 182–202 (VPIGINLLWGILMFFGMLFLP) form a helical membrane-spanning segment. Topologically, residues 203 to 268 (ESPRYLAVKG…IFSNEIRYRT (66 aa)) are cytoplasmic. The chain crosses the membrane as a helical span at residues 269-287 (LLGMGVMAFQQLTGNNYFF). Residues 288-303 (YYGTQVFRGTGLNSPF) are Extracellular-facing. The helical transmembrane segment at 304-324 (LAALILDAVNFGCTFGAIFVL) threads the bilayer. Over 325 to 330 (EYFGRR) the chain is Cytoplasmic. Residues 331 to 351 (GPLIVGGVWQSICFFIYASVG) form a helical membrane-spanning segment. Residues 352–365 (DRALTRPNGTSNHR) are Extracellular-facing. Asn-359 carries N-linked (GlcNAc...) asparagine glycosylation. The chain crosses the membrane as a helical span at residues 366–386 (AGAVMIVFSCLFIFSFAQTWA). The Cytoplasmic segment spans residues 387–406 (PAAYVIVGESYPIRYRSKCA). The chain crosses the membrane as a helical span at residues 407-427 (AVATASNWFWNFMISFFTPFI). Residues 428-434 (SNSIGFK) are Extracellular-facing. Residues 435 to 455 (YGYVFAACNLCAAIIIFLFAK) traverse the membrane as a helical segment. The Cytoplasmic segment spans residues 456-535 (ETKGLTLEEI…PQQVTNPVGL (80 aa)). Residues 484 to 508 (DREDIKQSDSEKERGPTSKLHEYVE) are compositionally biased toward basic and acidic residues. The disordered stretch occupies residues 484–535 (DREDIKQSDSEKERGPTSKLHEYVEHAPNSYASTHSTESENYPQQVTNPVGL). Residues 513–535 (SYASTHSTESENYPQQVTNPVGL) show a composition bias toward polar residues.

This sequence belongs to the major facilitator superfamily. Sugar transporter (TC 2.A.1.1) family.

Its subcellular location is the membrane. High-affinity fructose transporter. The polypeptide is High-affinity fructose transporter ght6 (ght6) (Schizosaccharomyces pombe (strain 972 / ATCC 24843) (Fission yeast)).